A 464-amino-acid polypeptide reads, in one-letter code: Argininosuccinate lyase (464 aa).

It belongs to the lyase 1 family. Argininosuccinate lyase subfamily.

It is found in the cytoplasm. The enzyme catalyses 2-(N(omega)-L-arginino)succinate = fumarate + L-arginine. Its pathway is amino-acid biosynthesis; L-arginine biosynthesis; L-arginine from L-ornithine and carbamoyl phosphate: step 3/3. This Herminiimonas arsenicoxydans protein is Argininosuccinate lyase.